We begin with the raw amino-acid sequence, 838 residues long: Outer membrane usher protein YraJ (838 aa).

An N-terminal signal peptide occupies residues 1 to 40 (MPQRHHQGHKRTPKQLALIIKRCLPMVLTGSGMLCTTANA). The cysteines at positions 815 and 837 are disulfide-linked.

Belongs to the fimbrial export usher family.

It localises to the cell outer membrane. Part of the yraHIJK fimbrial operon. Could contribute to adhesion to various surfaces in specific environmental niches. Increases adhesion to eukaryotic T24 bladder epithelial cells in the absence of fim operon. Probably involved in the export and assembly of fimbrial subunits across the outer membrane. This Escherichia coli (strain K12) protein is Outer membrane usher protein YraJ (yraJ).